The following is a 747-amino-acid chain: Asparagine synthetase [glutamine-hydrolyzing] 2 (747 aa).

C2 serves as the catalytic For GATase activity. The region spanning C2 to T218 is the Glutamine amidotransferase type-2 domain. L-glutamine is bound by residues R52–L56, N77–E79, and D100. S395 to P396 contributes to the ATP binding site.

It belongs to the asparagine synthetase family.

It carries out the reaction L-aspartate + L-glutamine + ATP + H2O = L-asparagine + L-glutamate + AMP + diphosphate + H(+). It functions in the pathway amino-acid biosynthesis; L-asparagine biosynthesis; L-asparagine from L-aspartate (L-Gln route): step 1/1. The protein is Asparagine synthetase [glutamine-hydrolyzing] 2 (asnH) of Bacillus subtilis (strain 168).